The chain runs to 168 residues: Photosystem I assembly protein Ycf3 (168 aa).

TPR repeat units lie at residues 35–68, 72–105, and 120–153; these read AFTY…EIDP, SYIL…NPFL, and GEQA…TPGN.

This sequence belongs to the Ycf3 family.

The protein resides in the plastid. Its subcellular location is the chloroplast thylakoid membrane. Essential for the assembly of the photosystem I (PSI) complex. May act as a chaperone-like factor to guide the assembly of the PSI subunits. This Nicotiana sylvestris (Wood tobacco) protein is Photosystem I assembly protein Ycf3.